Consider the following 363-residue polypeptide: tRNA/tmRNA (uracil-C(5))-methyltransferase (363 aa).

Residues Q187, Y215, N220, E236, and D296 each coordinate S-adenosyl-L-methionine. Catalysis depends on C321, which acts as the Nucleophile. Residue E355 is the Proton acceptor of the active site.

It belongs to the class I-like SAM-binding methyltransferase superfamily. RNA M5U methyltransferase family. TrmA subfamily.

It carries out the reaction uridine(54) in tRNA + S-adenosyl-L-methionine = 5-methyluridine(54) in tRNA + S-adenosyl-L-homocysteine + H(+). The catalysed reaction is uridine(341) in tmRNA + S-adenosyl-L-methionine = 5-methyluridine(341) in tmRNA + S-adenosyl-L-homocysteine + H(+). Dual-specificity methyltransferase that catalyzes the formation of 5-methyluridine at position 54 (m5U54) in all tRNAs, and that of position 341 (m5U341) in tmRNA (transfer-mRNA). The chain is tRNA/tmRNA (uracil-C(5))-methyltransferase from Pseudomonas fluorescens.